We begin with the raw amino-acid sequence, 503 residues long: Excitatory amino acid transporter (503 aa).

Over 1 to 18 the chain is Cytoplasmic; it reads MPPDTRINKEIMVSWIRK. 3 helical membrane-spanning segments follow: residues 19 to 39, 59 to 79, and 96 to 116; these read NLLLVLTVSSVVLGALCGFLL, LMHMLKMMILPLIMSSLISGL, and TYYMFTTAVAVVTGIFLVLVI. The Extracellular segment spans residues 117–198; the sequence is HPGDPTIKKE…SLDYVKASVE (82 aa). Residues Asn177 and Asn187 are each glycosylated (N-linked (GlcNAc...) asparagine). The next 5 helical transmembrane spans lie at 199-219, 239-259, 281-301, 369-389, and 400-420; these read YTSGMNVLGVIVFCIAIGISL, VIMKLVMTVMWYSPFGIFCLI, VTVLSGLAIHSLISLPLIFFV, AVAAIFIAQINGVHLSFGQVV, and IGAASVPSAGLVTMLLVLTAV.

The protein belongs to the dicarboxylate/amino acid:cation symporter (DAACS) (TC 2.A.23) family.

Its subcellular location is the membrane. Its function is as follows. Transports L-glutamate and also L- and D-aspartate. Essential for terminating the postsynaptic action of glutamate by rapidly removing released glutamate from the synaptic cleft. Acts as a symport by cotransporting sodium. The polypeptide is Excitatory amino acid transporter (glt-1) (Caenorhabditis elegans).